A 379-amino-acid chain; its full sequence is EP300-interacting inhibitor of differentiation 3 (379 aa).

The stretch at 32–58 forms a coiled coil; sequence LKQVEEEEEVEALKVEVAAASDTESDT.

It belongs to the NSE4 family. As to quaternary structure, component of the SMC5-SMC6 complex which consists at least of SMC5, SMC6, NSMCE2, NSMCE1, NSMCE4A or EID3 and NSMCE3. NSMCE1, NSMCE4A or EID3 and NSMCE3 probably form a subcomplex that bridges the head domains of the SMC5:SMC6 heterodimer. Homodimer, and heterodimer with EID2. Interacts with the C-terminal region of CREBBP.

Its subcellular location is the nucleus. The protein localises to the cytoplasm. It is found in the chromosome. The protein resides in the telomere. Functionally, tissue-specific component of the SMC5-SMC6 complex, a complex involved in repair of DNA double-strand breaks by homologous recombination. The complex may promote sister chromatid homologous recombination by recruiting the SMC1-SMC3 cohesin complex to double-strand breaks. The complex is required for telomere maintenance via recombination and mediates sumoylation of shelterin complex (telosome) components. Acts as a repressor of nuclear receptor-dependent transcription possibly by interfering with CREBBP-dependent coactivation. May function as a coinhibitor of other CREBBP/EP300-dependent transcription factors. The protein is EP300-interacting inhibitor of differentiation 3 of Bos taurus (Bovine).